The sequence spans 141 residues: Hemoglobin subunit alpha (141 aa).

One can recognise a Globin domain in the interval 1–141; that stretch reads VLSPGDKSNI…VSTVLTSKYR (141 aa). Ser3 carries the post-translational modification Phosphoserine. An N6-succinyllysine mark is found at Lys7 and Lys11. Lys16 is subject to N6-acetyllysine; alternate. An N6-succinyllysine; alternate modification is found at Lys16. Tyr24 bears the Phosphotyrosine mark. Position 35 is a phosphoserine (Ser35). Position 40 is an N6-succinyllysine (Lys40). A Phosphoserine modification is found at Ser49. His58 is an O2 binding site. His87 serves as a coordination point for heme b. Residue Ser102 is modified to Phosphoserine. A Phosphothreonine modification is found at Thr108. The residue at position 124 (Ser124) is a Phosphoserine. 2 positions are modified to phosphothreonine: Thr134 and Thr137. At Ser138 the chain carries Phosphoserine.

It belongs to the globin family. Heterotetramer of two alpha chains and two beta chains. Red blood cells.

Involved in oxygen transport from the lung to the various peripheral tissues. In terms of biological role, hemopressin acts as an antagonist peptide of the cannabinoid receptor CNR1. Hemopressin-binding efficiently blocks cannabinoid receptor CNR1 and subsequent signaling. The sequence is that of Hemoglobin subunit alpha (HBA) from Tupaia glis (Common tree shrew).